Here is an 816-residue protein sequence, read N- to C-terminus: MSKSDQEHTTTEPTIVAEEELRIPELLPLLPIRDVVVYPFMIIPLFVGREMSIKAVDQALAGDRMIMLATQHDIGDEDPTPDKIYNVGTVAMIMRMLKLPDGRVKILVQGLVKARIAEFVEFKPFHTVRIERLVEPVAVDNLETEALMRTVREQLAKIAELGKQISPEVMVILENITDPGSMADLIASNLGLKLSEAQMLLEIEDPVRRLTKVNDLLAREHEMLSVQAQIQNAAREEMGKNQKEYYLREQMKAIQQELGDHDGKEELEELRKAIETARMPENVEKEALKQLGRLERMHGDSGEAGVIRTYLDWLIEIPWSKTTRDSLDIIRAKKILDEDHSYLDKVKERILEFLAVRKLNKQMKGPILCFVGPPGVGKTSLGKSIARALNRKFVRISLGGVRDEAEIRGHRRTYLGALPGRIIQGMKQAGTRNPVFMLDELDKLGYDYKGDPSAALLEVLDPQQNNAFSDHYVNLPYDLSNVLFVATANHSDPIPSALFDRMEVINIPGYTEEEKLEIAIRYLVPRQMKDNGLKAKHIVFEEEALKEIIAKYTREAGLRNLEREIGNVCRKVARKIAEGHKRQIRVTPAAVATFLGAAKFLRDDEMDKNEVGVVNGLAWTSVGGEVLHIEATTMAGKGGMALTGQLGDVMKESVQAALAYIRSHGSEFHINPDWFQENEIHVHVPAGAVPKDGPSAGCAMATALISVLTKVPVKKDVAMTGEISLRGKVLPIGGLKEKILAAVRAGMKMVIIPEQNRKDLEDIPKAMQKKVKIVPVKEIDEVLKLALEKFPIPAPKGKAKPATPKVVVRPSKEISA.

The region spanning 27–221 (LPLLPIRDVV…KVNDLLAREH (195 aa)) is the Lon N-terminal domain. 372 to 379 (GPPGVGKT) is an ATP binding site. One can recognise a Lon proteolytic domain in the interval 608–789 (KNEVGVVNGL…DEVLKLALEK (182 aa)). Catalysis depends on residues serine 695 and lysine 738. The interval 795 to 816 (PKGKAKPATPKVVVRPSKEISA) is disordered. Residues 800 to 809 (KPATPKVVVR) are compositionally biased toward low complexity.

Belongs to the peptidase S16 family. As to quaternary structure, homohexamer. Organized in a ring with a central cavity.

It localises to the cytoplasm. The enzyme catalyses Hydrolysis of proteins in presence of ATP.. In terms of biological role, ATP-dependent serine protease that mediates the selective degradation of mutant and abnormal proteins as well as certain short-lived regulatory proteins. Required for cellular homeostasis and for survival from DNA damage and developmental changes induced by stress. Degrades polypeptides processively to yield small peptide fragments that are 5 to 10 amino acids long. Binds to DNA in a double-stranded, site-specific manner. The protein is Lon protease of Trichlorobacter lovleyi (strain ATCC BAA-1151 / DSM 17278 / SZ) (Geobacter lovleyi).